We begin with the raw amino-acid sequence, 175 residues long: Major oleosin NAP-II (175 aa).

The polar stretch occupies residues 1–47 (RRDQYPRDRDQYSMIGRDRDKYSMIGRDRDQYNMYGRDYSKSRQIAK). 2 consecutive repeats follow at residues 17-26 (RDRDKYSMIG) and 27-36 (RDRDQYNMYG). The hydrophobic stretch occupies residues 48 to 119 (AVTAVTAGGS…AAITVFSWIY (72 aa)). 3 helical membrane-spanning segments follow: residues 56–76 (GSLL…LTVA), 78–98 (PLLV…ALLI), and 99–119 (TGFL…SWIY). Residues 151 to 175 (AQYYGQQQTGGEDDRDRTRGTQHTT) form a disordered region.

Belongs to the oleosin family.

Its subcellular location is the lipid droplet. It localises to the membrane. In terms of biological role, may have a structural role to stabilize the lipid body during desiccation of the seed by preventing coalescence of the oil. Probably interacts with both lipid and phospholipid moieties of lipid bodies. May also provide recognition signals for specific lipase anchorage in lipolysis during seedling growth. In Brassica napus (Rape), this protein is Major oleosin NAP-II.